The sequence spans 871 residues: Isoleucine--tRNA ligase (871 aa).

Residues 57–67 (PYANGNLHMGH) carry the 'HIGH' region motif. Glu-554 contacts L-isoleucyl-5'-AMP. Positions 595–599 (KMSKS) match the 'KMSKS' region motif. ATP is bound at residue Lys-598.

Belongs to the class-I aminoacyl-tRNA synthetase family. IleS type 1 subfamily. In terms of assembly, monomer.

Its subcellular location is the cytoplasm. The enzyme catalyses tRNA(Ile) + L-isoleucine + ATP = L-isoleucyl-tRNA(Ile) + AMP + diphosphate. Its function is as follows. Catalyzes the attachment of isoleucine to tRNA(Ile). As IleRS can inadvertently accommodate and process structurally similar amino acids such as valine, to avoid such errors it has two additional distinct tRNA(Ile)-dependent editing activities. One activity is designated as 'pretransfer' editing and involves the hydrolysis of activated Val-AMP. The other activity is designated 'posttransfer' editing and involves deacylation of mischarged Val-tRNA(Ile). The chain is Isoleucine--tRNA ligase from Staphylococcus epidermidis.